Reading from the N-terminus, the 239-residue chain is Ribosomal RNA large subunit methyltransferase E (239 aa).

The S-adenosyl-L-methionine site is built by Gly88, Trp90, Asp111, Asp127, and Asp151. Residue Lys191 is the Proton acceptor of the active site.

This sequence belongs to the class I-like SAM-binding methyltransferase superfamily. RNA methyltransferase RlmE family.

The protein resides in the cytoplasm. It carries out the reaction uridine(2552) in 23S rRNA + S-adenosyl-L-methionine = 2'-O-methyluridine(2552) in 23S rRNA + S-adenosyl-L-homocysteine + H(+). Functionally, specifically methylates the uridine in position 2552 of 23S rRNA at the 2'-O position of the ribose in the fully assembled 50S ribosomal subunit. The chain is Ribosomal RNA large subunit methyltransferase E from Bartonella bacilliformis (strain ATCC 35685 / KC583 / Herrer 020/F12,63).